A 409-amino-acid chain; its full sequence is Putative kinase Y4dM (409 aa).

The active-site Proton acceptor is the Asp-293.

This sequence belongs to the HipA Ser/Thr kinase family.

The protein is Putative kinase Y4dM of Sinorhizobium fredii (strain NBRC 101917 / NGR234).